The following is a 300-amino-acid chain: Protein p34 (300 aa).

The next 5 membrane-spanning stretches (helical) occupy residues 14-34, 39-59, 87-107, 119-139, and 170-190; these read YLSV…WVVT, ILAS…NLVA, SIFF…SLFI, IIMY…TYVI, and LSDY…LYIF.

Belongs to the cation diffusion facilitator (CDF) transporter (TC 2.A.4) family.

Its subcellular location is the cell membrane. In Rickettsia prowazekii (strain Madrid E), this protein is Protein p34 (p34).